Reading from the N-terminus, the 478-residue chain is Transposase for insertion sequence element IS231C (478 aa).

Belongs to the transposase 11 family.

Its function is as follows. Involved in the transposition of the insertion sequence. The polypeptide is Transposase for insertion sequence element IS231C (Bacillus thuringiensis subsp. berliner).